Consider the following 446-residue polypeptide: MAQKLWEKNVRVNEEIDRFTVGRDREMDLYLAKHDVLGSMAHITMLESIGLLTAGELEMLLAELKNIYASAEKGEFVIEDGIEDVHSQVELMLTRKLGDVGKKIHSGRSRNDQVLVDLKLFTRAELKEVAEEVEQLFHVLISQSNTYKDVLMPGYTHLQIAMPSSFGLWFGAYAESLVDDMMFLQAAFKMCNRNPLGSAAGYGSSFPLDREMTTRLLGFDSMDYNVVYAQMGRGKMERNVAFALASIAGTVSKMAFDACMFSSQNFGFVKLPDECTTGSSIMPHKKNPDVFELTRAKCNKLQALPQQIMMIMNNLPSGYFRDLQIIKEVFLPAFRELKECLQMAAYIMDKIKINEHILDDNRYLYIFSVEEVNRLASEGMPFRDAYKKVGLDIEAGKFTHDKKVHHTHEGSIGNLCNDRIESLMRQVVDGFNFSVMEQAERSLLGR.

It belongs to the lyase 1 family. Argininosuccinate lyase subfamily.

It localises to the cytoplasm. The enzyme catalyses 2-(N(omega)-L-arginino)succinate = fumarate + L-arginine. The protein operates within amino-acid biosynthesis; L-arginine biosynthesis; L-arginine from L-ornithine and carbamoyl phosphate: step 3/3. In Phocaeicola vulgatus (strain ATCC 8482 / DSM 1447 / JCM 5826 / CCUG 4940 / NBRC 14291 / NCTC 11154) (Bacteroides vulgatus), this protein is Argininosuccinate lyase.